The primary structure comprises 479 residues: MFLFDIYNNILYYTKEFIVTSTSPNLFIHGLMAVFIIYLLTKRPFKPRQNDTLTKAEEDELIREWSPIPLTPKSNPLEVLNQTELIIQESEGTHVTINNKKYLNLARSNYLGLINNPEINKISENAIRKYGVGSCGPRGFYGTIDVHLDLEKKTASFMKTPEAVLYSSAYATISSAIPSFSKIGDIIIVDRGVSQPVQVGVSLSRSRIYYFNHNDMDDLQRVLEQTQFKGSKAKIVRKFVVIEGLYYNSGTIAPLPQILKFKEQYKFRLIMDESHSVGVLGSTGRGLTEHYNIDTNLVDILTGSYGNSFSSGGGFCCGSPEVVYHQRLNGVGYVFSASLPPFLACSSTKAIEMLEENPKMLEMLHSNIGELYQGLNKSGALNGLLEITSLPISPVIHLSLLDSKSNKSNRINDELLLQKIVDKAMDYGLLLTRAKYVSAEKFIPKPSIRISVSSNLSSDQIKQSIEIIKKCTSFVLESN.

Residues 1-16 (MFLFDIYNNILYYTKE) lie on the Lumenal side of the membrane. Residues 17–37 (FIVTSTSPNLFIHGLMAVFII) form a helical membrane-spanning segment. Over 38 to 479 (YLLTKRPFKP…KCTSFVLESN (442 aa)) the chain is Cytoplasmic.

This sequence belongs to the class-II pyridoxal-phosphate-dependent aminotransferase family. As to quaternary structure, forms a heterodimer with sptB. Requires pyridoxal 5'-phosphate as cofactor.

The protein localises to the endoplasmic reticulum membrane. The catalysed reaction is L-serine + hexadecanoyl-CoA + H(+) = 3-oxosphinganine + CO2 + CoA. It functions in the pathway lipid metabolism; sphingolipid metabolism. In terms of biological role, component of serine palmitoyltransferase (SPT), which catalyzes the committed step in the synthesis of sphingolipids, the condensation of serine with palmitoyl CoA to form the long chain base 3-ketosphinganine. The sequence is that of Serine palmitoyltransferase 1 (sptA) from Dictyostelium discoideum (Social amoeba).